The primary structure comprises 651 residues: Polyadenylate-binding protein 1 (651 aa).

Over residues 1–27 (MSSTESPVPAAAAPAEAVPASTPAPAA) the composition is skewed to low complexity. A disordered region spans residues 1–42 (MSSTESPVPAAAAPAEAVPASTPAPAAEQPAVGNGEQRNNAD). 4 RRM domains span residues 47–125 (TSLY…WSQR), 135–211 (GNIF…HHIP), 227–304 (TNVY…RAQK), and 330–407 (VNLY…LAQR). Disordered stretches follow at residues 481 to 554 (QPGQ…EADQ) and 632 to 651 (QNDS…KTEA). The span at 529–540 (AGQPVPGQPMPR) shows a compositional bias: pro residues. The PABC domain maps to 555-632 (PGALTAAALA…ALEVLKEYQQ (78 aa)). Residues 636–651 (AGAEAEANAEAPKTEA) show a composition bias toward low complexity.

It belongs to the polyadenylate-binding protein type-1 family. In terms of assembly, part of large ribonucleoprotein complexes (mRNPs) containing RNA-binding proteins RRM4 and PAB1, endosome-binding protein UPA1, core scaffold protein UPA2 and associated factor GRP1. Interacts (via PABC domain) with UPA1 (via PAM2 domain). Interacts (via PABC domain) with UPA2 (via PAM2 domains).

It is found in the cytoplasm. The protein localises to the cytoskeleton. It localises to the endosome. Its function is as follows. RNA-binding protein involved in the formation of polar-growing hyphae which is essential for infection by the plant pathogen. Component of endosomal mRNA transport that regulates polarity of the infectious hyphae by transporting a broad spectrum of cargo mRNAs from the nucleus to cell poles. This chain is Polyadenylate-binding protein 1, found in Mycosarcoma maydis (Corn smut fungus).